We begin with the raw amino-acid sequence, 401 residues long: Argininosuccinate synthase (401 aa).

ATP is bound at residue 9–17; it reads AYSGGLDTS. Tyr88 serves as a coordination point for L-citrulline. ATP is bound at residue Gly118. Residues Thr120, Asn124, and Asp125 each coordinate L-aspartate. Asn124 contributes to the L-citrulline binding site. Positions 128, 177, 186, 262, and 274 each coordinate L-citrulline.

The protein belongs to the argininosuccinate synthase family. Type 1 subfamily. In terms of assembly, homotetramer.

It is found in the cytoplasm. It catalyses the reaction L-citrulline + L-aspartate + ATP = 2-(N(omega)-L-arginino)succinate + AMP + diphosphate + H(+). It functions in the pathway amino-acid biosynthesis; L-arginine biosynthesis; L-arginine from L-ornithine and carbamoyl phosphate: step 2/3. The polypeptide is Argininosuccinate synthase (Chlorobaculum tepidum (strain ATCC 49652 / DSM 12025 / NBRC 103806 / TLS) (Chlorobium tepidum)).